We begin with the raw amino-acid sequence, 384 residues long: Carbamoyl phosphate synthase small chain (384 aa).

The tract at residues 1 to 193 is CPSase; it reads MTKPATTPAI…DSHPEIPASE (193 aa). L-glutamine contacts are provided by Ser51, Gly245, and Gly247. Residues 197–384 enclose the Glutamine amidotransferase type-1 domain; that stretch reads HVVAYDYGVK…ISAMAPVVDR (188 aa). The active-site Nucleophile is Cys273. L-glutamine-binding residues include Leu274, Gln277, Asn315, Gly317, and Phe318. Catalysis depends on residues His357 and Glu359.

This sequence belongs to the CarA family. In terms of assembly, composed of two chains; the small (or glutamine) chain promotes the hydrolysis of glutamine to ammonia, which is used by the large (or ammonia) chain to synthesize carbamoyl phosphate. Tetramer of heterodimers (alpha,beta)4.

It catalyses the reaction hydrogencarbonate + L-glutamine + 2 ATP + H2O = carbamoyl phosphate + L-glutamate + 2 ADP + phosphate + 2 H(+). The enzyme catalyses L-glutamine + H2O = L-glutamate + NH4(+). It participates in amino-acid biosynthesis; L-arginine biosynthesis; carbamoyl phosphate from bicarbonate: step 1/1. The protein operates within pyrimidine metabolism; UMP biosynthesis via de novo pathway; (S)-dihydroorotate from bicarbonate: step 1/3. Its function is as follows. Small subunit of the glutamine-dependent carbamoyl phosphate synthetase (CPSase). CPSase catalyzes the formation of carbamoyl phosphate from the ammonia moiety of glutamine, carbonate, and phosphate donated by ATP, constituting the first step of 2 biosynthetic pathways, one leading to arginine and/or urea and the other to pyrimidine nucleotides. The small subunit (glutamine amidotransferase) binds and cleaves glutamine to supply the large subunit with the substrate ammonia. The protein is Carbamoyl phosphate synthase small chain of Stutzerimonas stutzeri (Pseudomonas stutzeri).